The following is a 744-amino-acid chain: ATP-dependent zinc metalloprotease FtsH (744 aa).

At 1-16 (MQDQNNSNTPKKKKLS) the chain is on the cytoplasmic side. A helical transmembrane segment spans residues 17-37 (FWGIIGIVASILVLLVIAYII). Over 38-177 (YYYVSQTTVL…ESIWSTVLRY (140 aa)) the chain is Extracellular. The chain crosses the membrane as a helical span at residues 178 to 198 (GTNIIFLLLFAASFIFMFMSF). At 199–744 (RSQRGTGGLL…EEKSKDEKNN (546 aa)) the chain is on the cytoplasmic side. 264 to 271 (GPPGTGKT) lines the ATP pocket. Position 486 (His-486) interacts with Zn(2+). The active site involves Glu-487. Residues His-490 and Asp-564 each coordinate Zn(2+). A disordered region spans residues 722–744 (IEANKSSSKSTVNEEKSKDEKNN). Residues 733–744 (VNEEKSKDEKNN) show a composition bias toward basic and acidic residues.

The protein in the central section; belongs to the AAA ATPase family. In the C-terminal section; belongs to the peptidase M41 family. In terms of assembly, homohexamer. Zn(2+) serves as cofactor.

Its subcellular location is the cell membrane. In terms of biological role, acts as a processive, ATP-dependent zinc metallopeptidase for both cytoplasmic and membrane proteins. Plays a role in the quality control of integral membrane proteins. The polypeptide is ATP-dependent zinc metalloprotease FtsH (Metamycoplasma arthritidis (strain 158L3-1) (Mycoplasma arthritidis)).